The primary structure comprises 365 residues: MKSVRSFIRDDIQAMSAYQIADVPPGFAKLDSMESPVHPFAGHETLLQEWQARLAAAPIHLYPNPSGSGLQEALRSAFDIPDCADIALGNGSDELIQFITMLTAKPGAAMLAAEPSFVMYRHNAALYGMDYVGVPLNGDFTLNLPAVLEAVRKHRPALTFIAYPNNPTGVCFTRAEIEAVIEASDGIVVVDEAYGAFNGDSFLPQAGSIPNLIVMRTVSKIGFAGLRIGYAAGCPEVIGELQKILPPYNMNQLSLTTAKLALQHYGIISANIDSLKNERERMFAELGKICRLNTFPSQANFITIRVPDADLLFDTLKQNRILVKKLHGAHPLLEHCLRITVGSPAQNDAVLNIIRQLYCQPTDFL.

Lys-220 is subject to N6-(pyridoxal phosphate)lysine.

Belongs to the class-II pyridoxal-phosphate-dependent aminotransferase family. Histidinol-phosphate aminotransferase subfamily. As to quaternary structure, homodimer. The cofactor is pyridoxal 5'-phosphate.

It carries out the reaction L-histidinol phosphate + 2-oxoglutarate = 3-(imidazol-4-yl)-2-oxopropyl phosphate + L-glutamate. The protein operates within amino-acid biosynthesis; L-histidine biosynthesis; L-histidine from 5-phospho-alpha-D-ribose 1-diphosphate: step 7/9. This chain is Histidinol-phosphate aminotransferase, found in Neisseria meningitidis serogroup A / serotype 4A (strain DSM 15465 / Z2491).